Reading from the N-terminus, the 408-residue chain is uncharacterized protein (408 aa).

The span at N376–N386 shows a compositional bias: polar residues. The segment at N376–Q408 is disordered. A compositionally biased stretch (basic and acidic residues) spans E389–E401.

This is an uncharacterized protein from Acanthamoeba polyphaga (Amoeba).